An 878-amino-acid chain; its full sequence is MDRTFYEGWLIKSPPTKRIWRARWRRRYFTLKQGEIPEQFCLEYYTDHNCRKLKGVIDLDQCEQVDCGLRLENRKQKFQYMFDIKTPKRTYYLAAETEADMRDWVNCICQVCHLHDTKQSNELPLGAVGADENRTQHTSSSGGLSNSTQNTTTTSLHSSAGTTAPQASVPNAGGSAQLRRPAVIEEQPMPSNAGNNNSDSVYVNTEYSNRETMLCDANFDQQELLSAAQQQPPPSPATALYLNHSALIQAQAAAAAAEQLQQQQQQAARLAVSANGVVRKLPEHLVLTQQTLAEAAAQQHSSVQASPALSTASGPYIPISECFSGSPRFLPGVPLPGADLAIPNNPTTPLNNLDPKFYDTPRSHNNIGLNLTNDQSYSPKITNLSLQQLANNNASKQRSDSDSESVFTDDDEWAHPLPLRENVDRSTRPSDSSIENESFVLTYSQRFSKMPEEGGAIVPPAEKSSKLAGAASLPEAGDQGTLDKLAKVLKNKNNLILDFKENEKIPRDLPQLSDTENTSPAIVARRNAHSAFIEESYDIPRSHQQPYYNVNQLLGERPVTSPHNSNPIAASTPNLMAADLGAVAAISAAANPGLMGEAQAVASSPTSARTLPRHCYTNAAPTKMEGNVFRYDFMEQADCPPVNRKLKPKVAGGLPVVEDKPPEEFPAKPPVGVDQLTNKLGAAQLQQPIGPPSVDRKCKPNAYKLGNSATMSPATRRSSGAPLSMVLPHETDVHSPAAANAFFHETRTLPRQQHRHHPNSPGSMSVQHQRTASAAAAMMSLTAAAAPKQQAAAQTEHKLQYFDLDVTNKPPLLNRSSMSVGNLYSQGGNGASGMRFAGVEAGGARAPVPSSVVYRSVDFVKTEAFKRIREERESSGNK.

The PH domain occupies 3–113; that stretch reads RTFYEGWLIK…WVNCICQVCH (111 aa). The disordered stretch occupies residues 132 to 176; sequence ENRTQHTSSSGGLSNSTQNTTTTSLHSSAGTTAPQASVPNAGGSA. Over residues 136–159 the composition is skewed to low complexity; sequence QHTSSSGGLSNSTQNTTTTSLHSS. A compositionally biased stretch (polar residues) spans 160-169; sequence AGTTAPQASV. Positions 246–275 form a coiled coil; that stretch reads ALIQAQAAAAAAEQLQQQQQQAARLAVSAN. The interval 391–437 is disordered; it reads NNNASKQRSDSDSESVFTDDDEWAHPLPLRENVDRSTRPSDSSIENE. Position 399 is a phosphoserine (S399). A Phosphothreonine modification is found at T481. Interaction with DRK regions lie at residues 638-650 and 690-702; these read DCPP…KPKV and GPPS…KPNA. 2 disordered regions span residues 686-721 and 749-773; these read QQPI…SSGA and LPRQ…RTAS. Polar residues-rich tracts occupy residues 707-718 and 760-770; these read NSATMSPATRRS and SPGSMSVQHQR. Residue T771 is modified to Phosphothreonine. A phosphotyrosine mark is found at Y801 and Y854.

As to quaternary structure, interacts with DRK. Phosphorylated on Tyr-801 and Tyr-854 in response to sevenless activation, which initiates the recruitment of the phosphatase CSW.

Its subcellular location is the cytoplasm. It is found in the membrane. Its function is as follows. Essential component for signaling from various receptor tyrosine kinases such as Sevenless, TORSO and DER. Required for photoreceptor cell and wing development. This chain is Protein daughter of sevenless (dos), found in Drosophila melanogaster (Fruit fly).